Here is a 326-residue protein sequence, read N- to C-terminus: tRNA-modifying protein YgfZ (326 aa).

Folate contacts are provided by Trp27 and Trp189.

It belongs to the tRNA-modifying YgfZ family.

The protein localises to the cytoplasm. In terms of biological role, folate-binding protein involved in regulating the level of ATP-DnaA and in the modification of some tRNAs. It is probably a key factor in regulatory networks that act via tRNA modification, such as initiation of chromosomal replication. The chain is tRNA-modifying protein YgfZ from Salmonella paratyphi C (strain RKS4594).